The chain runs to 547 residues: Chaperonin GroEL 1 (547 aa).

Residues 30 to 33, K51, 87 to 91, G415, and D495 contribute to the ATP site; these read TLGP and DGTTT.

The protein belongs to the chaperonin (HSP60) family. Forms a cylinder of 14 subunits composed of two heptameric rings stacked back-to-back. Interacts with the co-chaperonin GroES.

It is found in the cytoplasm. The enzyme catalyses ATP + H2O + a folded polypeptide = ADP + phosphate + an unfolded polypeptide.. Functionally, together with its co-chaperonin GroES, plays an essential role in assisting protein folding. The GroEL-GroES system forms a nano-cage that allows encapsulation of the non-native substrate proteins and provides a physical environment optimized to promote and accelerate protein folding. The chain is Chaperonin GroEL 1 from Azorhizobium caulinodans (strain ATCC 43989 / DSM 5975 / JCM 20966 / LMG 6465 / NBRC 14845 / NCIMB 13405 / ORS 571).